Consider the following 2752-residue polypeptide: Serine/arginine repetitive matrix protein 2 (2752 aa).

At Met-1 the chain carries N-acetylmethionine. Residues His-60–Ala-92 are a coiled coil. The residue at position 101 (Lys-101) is an N6-acetyllysine. Glycyl lysine isopeptide (Lys-Gly) (interchain with G-Cter in SUMO2) cross-links involve residues Lys-108 and Lys-130. Residues Ile-141–Arg-2131 form a disordered region. At Tyr-145 the chain carries Phosphotyrosine. Lys-169 is subject to N6-acetyllysine. Residues Arg-175–Pro-185 show a composition bias toward low complexity. Composition is skewed to basic residues over residues Lys-186 to Gly-197 and Arg-207 to Arg-249. Residues Gly-197 to Arg-259 form a sufficient for RNA-binding region. Phosphoserine occurs at positions 220 and 222. Low complexity predominate over residues Ser-263–Ala-290. Thr-286 bears the Phosphothreonine mark. Residues Ser-295, Ser-297, Ser-300, Ser-322, and Ser-323 each carry the phosphoserine modification. A compositionally biased stretch (polar residues) spans Pro-313–Ser-333. Basic and acidic residues predominate over residues Tyr-335–Ala-347. Residues Thr-348–Gly-360 show a composition bias toward low complexity. Residues Ser-351, Ser-353, Ser-357, and Ser-358 each carry the phosphoserine modification. A phosphothreonine mark is found at Thr-359 and Thr-367. Phosphoserine is present on Ser-377. Polar residues predominate over residues Pro-380–Ser-398. Thr-383 and Thr-384 each carry phosphothreonine. A phosphoserine mark is found at Ser-387, Ser-395, Ser-398, Ser-404, and Ser-408. Over residues Pro-399 to Glu-410 the composition is skewed to basic and acidic residues. Residues Lys-411 to Ser-421 are compositionally biased toward low complexity. Residues Ser-424, Ser-435, Ser-436, Ser-437, Ser-440, and Ser-454 each carry the phosphoserine modification. Over residues Asn-461 to Arg-483 the composition is skewed to basic residues. Residues Ser-484, Ser-486, Ser-506, Ser-508, Ser-510, Ser-534, Ser-536, and Ser-543 each carry the phosphoserine modification. The segment covering Lys-491 to Ser-536 has biased composition (basic residues). Positions Pro-537–Arg-546 are enriched in low complexity. 3 stretches are compositionally biased toward basic residues: residues Asn-547–Ser-564, Gly-571–Arg-723, and Asn-732–Arg-742. 3 positions are modified to phosphoserine: Ser-702, Ser-704, and Ser-706. Ser-778, Ser-780, and Ser-783 each carry phosphoserine. The span at Ser-790 to Lys-805 shows a compositional bias: low complexity. The segment covering Ala-806–Arg-816 has biased composition (basic residues). Residues Lys-828–His-841 show a composition bias toward low complexity. 2 positions are modified to phosphoserine: Ser-846 and Ser-854. Residues Pro-849 to Arg-869 show a composition bias toward polar residues. Thr-856 is modified (phosphothreonine). Ser-857 and Ser-864 each carry phosphoserine. Position 866 is a phosphothreonine (Thr-866). Phosphoserine occurs at positions 871, 875, 876, 908, 935, 950, 952, 954, 957, 968, 970, 972, 973, and 974. Composition is skewed to low complexity over residues Ser-901–Pro-917 and Ser-924–Thr-945. Phosphothreonine is present on residues Thr-977 and Thr-983. Residues Ser-992 and Ser-994 each carry the phosphoserine modification. Tyr-996 is subject to Phosphotyrosine. Residue Thr-1003 is modified to Phosphothreonine. Positions Ser-1008–Pro-1017 are enriched in low complexity. Phosphoserine occurs at positions 1010, 1014, 1024, 1028, 1032, and 1042. Positions Lys-1040 to Ser-1064 are enriched in polar residues. Position 1043 is a phosphothreonine (Thr-1043). Tyr-1049 carries the post-translational modification Phosphotyrosine. Residues Ser-1064, Ser-1069, Ser-1072, Ser-1073, Ser-1083, Ser-1099, Ser-1101, Ser-1102, and Ser-1103 each carry the phosphoserine modification. The span at Thr-1071 to Thr-1092 shows a compositional bias: polar residues. The span at Ser-1093–Pro-1104 shows a compositional bias: low complexity. At Thr-1106 the chain carries Phosphothreonine. Ser-1112, Ser-1122, Ser-1124, Ser-1129, Ser-1132, Ser-1152, Ser-1179, Ser-1188, and Ser-1198 each carry phosphoserine. The segment covering Ser-1132–Leu-1159 has biased composition (polar residues). Positions Asp-1204–Ser-1214 are enriched in basic and acidic residues. The residue at position 1208 (Thr-1208) is a Phosphothreonine. Ser-1214, Ser-1219, Ser-1227, Ser-1254, Ser-1257, Ser-1258, Ser-1266, Ser-1270, and Ser-1271 each carry phosphoserine. Positions Ala-1216–Ser-1233 are enriched in polar residues. The segment covering Thr-1283 to Ser-1292 has biased composition (polar residues). A phosphoserine mark is found at Ser-1311, Ser-1318, Ser-1320, Ser-1326, Ser-1329, Ser-1336, Ser-1348, Ser-1368, Ser-1382, Ser-1383, Ser-1384, Ser-1387, Ser-1401, Ser-1403, and Ser-1404. The span at Ser-1318–Gly-1328 shows a compositional bias: polar residues. A compositionally biased stretch (polar residues) spans Thr-1376–Leu-1386. Phosphothreonine is present on Thr-1413. A phosphoserine mark is found at Ser-1415, Ser-1421, Ser-1423, and Ser-1424. Position 1434 is a phosphothreonine (Thr-1434). Positions Ser-1441–Gly-1452 are enriched in low complexity. Ser-1444 and Ser-1451 each carry phosphoserine. Residue Thr-1453 is modified to Phosphothreonine. The segment covering Thr-1453–Ser-1463 has biased composition (polar residues). Phosphoserine is present on residues Ser-1458, Ser-1460, Ser-1462, and Ser-1463. Thr-1472 carries the phosphothreonine modification. Residues Ser-1482 and Ser-1483 each carry the phosphoserine modification. Position 1492 is a phosphothreonine (Thr-1492). Phosphoserine occurs at positions 1497, 1499, 1501, and 1502. At Thr-1511 the chain carries Phosphothreonine. Residues Ser-1517, Ser-1519, Ser-1521, and Ser-1522 each carry the phosphoserine modification. A Phosphothreonine modification is found at Thr-1531. Residues Gly-1534 to Glu-1544 show a composition bias toward polar residues. A phosphoserine mark is found at Ser-1537, Ser-1539, Ser-1541, Ser-1542, and Ser-1552. A compositionally biased stretch (basic and acidic residues) spans Glu-1555–Ala-1567. Basic residues predominate over residues Lys-1568–Ser-1577. Phosphoserine occurs at positions 1577, 1579, 1581, 1582, 1598, 1600, 1601, 1616, 1620, 1621, 1648, 1658, 1691, 1693, and 1694. Residues Ser-1638–Ser-1657 show a composition bias toward low complexity. Over residues Lys-1681–Ser-1691 the composition is skewed to basic residues. Thr-1698 is subject to Phosphothreonine. Phosphoserine occurs at positions 1727, 1729, 1731, 1732, 1762, and 1764. Composition is skewed to basic residues over residues Gly-1769–Asp-1789 and Ser-1798–Gly-1816. A phosphoserine mark is found at Ser-1818, Ser-1822, Ser-1854, Ser-1857, Ser-1876, and Ser-1878. Residues Ser-1834 to Ser-1854 show a composition bias toward basic residues. Basic residues predominate over residues Lys-1862–Leu-2068. Thr-1880 is subject to Phosphothreonine. Ser-1884 and Ser-1890 each carry phosphoserine. Residue Thr-1892 is modified to Phosphothreonine. Phosphoserine is present on residues Ser-1893, Ser-1916, Ser-1919, Ser-1923, and Ser-1925. Phosphothreonine occurs at positions 1927 and 1931. A phosphoserine mark is found at Ser-1946 and Ser-1948. 2 positions are modified to phosphothreonine: Thr-1950 and Thr-1954. Phosphoserine occurs at positions 1958 and 1960. A phosphothreonine mark is found at Thr-1962 and Thr-1966. 3 positions are modified to phosphoserine: Ser-1970, Ser-1972, and Ser-1975. Thr-1978 is subject to Phosphothreonine. Phosphoserine occurs at positions 1984, 1987, 1996, 1999, 2008, 2011, 2018, and 2020. The residue at position 2022 (Thr-2022) is a Phosphothreonine. 2 positions are modified to phosphoserine: Ser-2030 and Ser-2032. Thr-2034 is modified (phosphothreonine). 4 positions are modified to phosphoserine: Ser-2042, Ser-2044, Ser-2046, and Ser-2067. Thr-2069 carries the post-translational modification Phosphothreonine. The span at Arg-2070–Ala-2095 shows a compositional bias: low complexity. 2 positions are modified to phosphoserine: Ser-2071 and Ser-2090. Thr-2092 is subject to Phosphothreonine. Residues Arg-2097–Pro-2124 are compositionally biased toward polar residues. A phosphoserine mark is found at Ser-2100 and Ser-2102. At Thr-2104 the chain carries Phosphothreonine. 4 positions are modified to phosphoserine: Ser-2118, Ser-2121, Ser-2123, and Ser-2132. Residue Thr-2144 is modified to Phosphothreonine. Omega-N-methylarginine occurs at positions 2194, 2207, 2231, and 2246. At Ser-2272 the chain carries Phosphoserine. Residues Arg-2274 and Arg-2288 each carry the omega-N-methylarginine modification. 3 positions are modified to phosphothreonine: Thr-2289, Thr-2291, and Thr-2302. Ser-2310 carries the post-translational modification Phosphoserine. Residues Leu-2311–Arg-2342 are disordered. Residues Thr-2316 and Thr-2329 each carry the phosphothreonine modification. Polar residues predominate over residues Pro-2317–Ala-2334. Ser-2335 is modified (phosphoserine). Residue Arg-2342 is modified to Omega-N-methylarginine. 3 positions are modified to phosphoserine: Ser-2343, Ser-2368, and Ser-2376. At Thr-2381 the chain carries Phosphothreonine. Ser-2382 carries the post-translational modification Phosphoserine. Arg-2384 carries the post-translational modification Asymmetric dimethylarginine; alternate. The residue at position 2384 (Arg-2384) is an Omega-N-methylarginine; alternate. The tract at residues Ala-2389–Pro-2752 is disordered. Phosphoserine occurs at positions 2394, 2398, and 2407. The residue at position 2409 (Thr-2409) is a Phosphothreonine. Ser-2412, Ser-2415, Ser-2426, Ser-2429, Ser-2449, and Ser-2453 each carry phosphoserine. Positions Ser-2426–Leu-2439 are enriched in polar residues. The span at Phe-2455–Gln-2473 shows a compositional bias: polar residues. Composition is skewed to low complexity over residues Ser-2474–Ala-2487, Ala-2515–Pro-2526, and Ser-2533–Ser-2567. Phosphoserine is present on Ser-2581. Thr-2583 carries the post-translational modification Phosphothreonine. Lys-2587 participates in a covalent cross-link: Glycyl lysine isopeptide (Lys-Gly) (interchain with G-Cter in SUMO2). Thr-2599 bears the Phosphothreonine mark. Residues Ser-2608–Ser-2648 are compositionally biased toward low complexity. Positions Pro-2651 to Pro-2668 are enriched in pro residues. Phosphoserine is present on residues Ser-2664, Ser-2675, Ser-2677, Ser-2684, Ser-2688, Ser-2690, Ser-2692, Ser-2694, Ser-2702, and Ser-2706. A compositionally biased stretch (basic and acidic residues) spans Pro-2669–Arg-2689. The segment covering Pro-2707–Glu-2716 has biased composition (low complexity). Basic and acidic residues predominate over residues Arg-2717–Ser-2729. Phosphothreonine is present on Thr-2738. Residue Ser-2740 is modified to Phosphoserine. Basic residues predominate over residues Pro-2743–Pro-2752.

It belongs to the CWC21 family. In terms of assembly, component of pre-catalytic, catalytic and post-catalytic spliceosome complexes. Found in a pre-mRNA splicing complex with SFRS4, SFRS5, SNRP70, SNRPA1, SRRM1 and SRRM2. Component of the minor spliceosome, which splices U12-type introns. Interacts with DHX8. Interacts with CACTIN. Expressed in liver, placenta, and white blood cells.

Its subcellular location is the nucleus. The protein localises to the nucleus speckle. Its function is as follows. Required for pre-mRNA splicing as component of the spliceosome. As a component of the minor spliceosome, involved in the splicing of U12-type introns in pre-mRNAs. This is Serine/arginine repetitive matrix protein 2 (SRRM2) from Homo sapiens (Human).